A 203-amino-acid chain; its full sequence is Mitotic spindle assembly checkpoint protein MAD2A (203 aa).

The region spanning 14–196 (KGSTEIVTEF…TTIHKVESMV (183 aa)) is the HORMA domain. The tract at residues 194–203 (SMVAYKISND) is required for assuming the closed conformation and for interaction with cdc20.

This sequence belongs to the MAD2 family. In terms of assembly, interacts with cdc20.

The protein localises to the nucleus. Its subcellular location is the chromosome. The protein resides in the centromere. It is found in the kinetochore. It localises to the cytoplasm. In terms of biological role, component of the spindle-assembly checkpoint that prevents the onset of anaphase until all chromosomes are properly aligned at the metaphase plate. Required for the execution of the mitotic checkpoint which monitors the process of kinetochore-spindle attachment and inhibits the activity of the anaphase promoting complex until all chromosomes are aligned at the metaphase plate. This is Mitotic spindle assembly checkpoint protein MAD2A (mad2l1-1) from Dictyostelium discoideum (Social amoeba).